Consider the following 360-residue polypeptide: Photosystem II protein D1 1 (360 aa).

3 consecutive transmembrane segments (helical) span residues 29–46 (YVGW…TATT), 118–133 (HFLI…EWEL), and 142–156 (WICV…AATA). His118 contributes to the chlorophyll a binding site. Tyr126 contacts pheophytin a. [CaMn4O5] cluster contacts are provided by Asp170 and Glu189. A helical membrane pass occupies residues 197 to 218 (FHMLGVAGVFGGSLFSAMHGSL). His198 is a binding site for chlorophyll a. Residues His215 and 264–265 (SF) each bind a quinone. Residue His215 coordinates Fe cation. His272 is a binding site for Fe cation. Residues 274-288 (FLGAWPVVGIWFTAL) traverse the membrane as a helical segment. 4 residues coordinate [CaMn4O5] cluster: His332, Glu333, Asp342, and Ala344. Residues 345–360 (AGEQAPVALQAPAING) constitute a propeptide that is removed on maturation.

It belongs to the reaction center PufL/M/PsbA/D family. As to quaternary structure, PSII is composed of 1 copy each of membrane proteins PsbA, PsbB, PsbC, PsbD, PsbE, PsbF, PsbH, PsbI, PsbJ, PsbK, PsbL, PsbM, PsbT, PsbX, PsbY, PsbZ, Psb30/Ycf12, peripheral proteins PsbO, CyanoQ (PsbQ), PsbU, PsbV and a large number of cofactors. It forms dimeric complexes. It depends on The D1/D2 heterodimer binds P680, chlorophylls that are the primary electron donor of PSII, and subsequent electron acceptors. It shares a non-heme iron and each subunit binds pheophytin, quinone, additional chlorophylls, carotenoids and lipids. D1 provides most of the ligands for the Mn4-Ca-O5 cluster of the oxygen-evolving complex (OEC). There is also a Cl(-1) ion associated with D1 and D2, which is required for oxygen evolution. The PSII complex binds additional chlorophylls, carotenoids and specific lipids. as a cofactor. Tyr-161 forms a radical intermediate that is referred to as redox-active TyrZ, YZ or Y-Z. In terms of processing, C-terminally processed by CtpA; processing is essential to allow assembly of the oxygen-evolving complex and thus photosynthetic growth.

Its subcellular location is the cellular thylakoid membrane. It carries out the reaction 2 a plastoquinone + 4 hnu + 2 H2O = 2 a plastoquinol + O2. In terms of biological role, photosystem II (PSII) is a light-driven water:plastoquinone oxidoreductase that uses light energy to abstract electrons from H(2)O, generating O(2) and a proton gradient subsequently used for ATP formation. It consists of a core antenna complex that captures photons, and an electron transfer chain that converts photonic excitation into a charge separation. The D1/D2 (PsbA/PsbD) reaction center heterodimer binds P680, the primary electron donor of PSII as well as several subsequent electron acceptors. The sequence is that of Photosystem II protein D1 1 from Picosynechococcus sp. (strain ATCC 27264 / PCC 7002 / PR-6) (Agmenellum quadruplicatum).